Reading from the N-terminus, the 373-residue chain is P2Y purinoceptor 1 (373 aa).

The Extracellular portion of the chain corresponds to M1 to F51. 2 N-linked (GlcNAc...) asparagine glycosylation sites follow: N11 and N27. Disulfide bonds link C42–C296 and C124–C202. Residue K46 coordinates ADP. A helical membrane pass occupies residues Y52–W74. At M75–S87 the chain is on the cytoplasmic side. The chain crosses the membrane as a helical span at residues V88–F109. Topologically, residues Y110–K125 are extracellular. N113 carries N-linked (GlcNAc...) asparagine glycosylation. The chain crosses the membrane as a helical span at residues L126–A147. The Cytoplasmic portion of the chain corresponds to H148 to K166. A helical transmembrane segment spans residues N167–F188. Over Y189–Y214 the chain is Extracellular. N197 carries N-linked (GlcNAc...) asparagine glycosylation. Y203–T205 contributes to the ADP binding site. The helical transmembrane segment at F215–Y237 threads the bilayer. Topologically, residues G238–Y260 are cytoplasmic. A helical membrane pass occupies residues L261–L284. Residues N283 to R287, Y303 to Y306, and R310 contribute to the ADP site. The Extracellular segment spans residues R285 to Y303. A helical membrane pass occupies residues A304 to F325. Topologically, residues L326–L373 are cytoplasmic.

This sequence belongs to the G-protein coupled receptor 1 family.

The protein localises to the cell membrane. Its function is as follows. Receptor for extracellular adenine nucleotides such as ADP. In platelets, binding to ADP leads to mobilization of intracellular calcium ions via activation of phospholipase C, a change in platelet shape, and ultimately platelet aggregation. This Bos taurus (Bovine) protein is P2Y purinoceptor 1 (P2RY1).